The following is a 428-amino-acid chain: Enolase (428 aa).

Q163 contacts (2R)-2-phosphoglycerate. The Proton donor role is filled by E205. Positions 242, 286, and 313 each coordinate Mg(2+). (2R)-2-phosphoglycerate-binding residues include K338, R367, S368, and K389. The active-site Proton acceptor is the K338.

This sequence belongs to the enolase family. Requires Mg(2+) as cofactor.

It is found in the cytoplasm. Its subcellular location is the secreted. The protein localises to the cell surface. The enzyme catalyses (2R)-2-phosphoglycerate = phosphoenolpyruvate + H2O. It participates in carbohydrate degradation; glycolysis; pyruvate from D-glyceraldehyde 3-phosphate: step 4/5. Functionally, catalyzes the reversible conversion of 2-phosphoglycerate (2-PG) into phosphoenolpyruvate (PEP). It is essential for the degradation of carbohydrates via glycolysis. This is Enolase from Acidovorax ebreus (strain TPSY) (Diaphorobacter sp. (strain TPSY)).